A 308-amino-acid polypeptide reads, in one-letter code: Elongation factor Ts (308 aa).

The tract at residues 80 to 83 (TDFV) is involved in Mg(2+) ion dislocation from EF-Tu.

This sequence belongs to the EF-Ts family.

The protein localises to the cytoplasm. In terms of biological role, associates with the EF-Tu.GDP complex and induces the exchange of GDP to GTP. It remains bound to the aminoacyl-tRNA.EF-Tu.GTP complex up to the GTP hydrolysis stage on the ribosome. The sequence is that of Elongation factor Ts from Rhizobium johnstonii (strain DSM 114642 / LMG 32736 / 3841) (Rhizobium leguminosarum bv. viciae).